We begin with the raw amino-acid sequence, 133 residues long: IgW chain C region, secreted form 2 (133 aa).

Residues 1–71 enclose the Ig-like domain; it reads VISGFYPDSV…TGSRFNDRIS (71 aa). Residues Asn-32 and Asn-112 are each glycosylated (N-linked (GlcNAc...) asparagine). Positions 76-133 are secretory tail; sequence KGGTVNLPVPGGNTPCTCPPSSCSGCMPKLVYQTDLNVTLENGGQLQYNCHQQACKIK.

Expressed mainly in lymphoid tissues including spleen, epigonal organ and circulating lymphocytes.

The protein localises to the secreted. The polypeptide is IgW chain C region, secreted form 2 (Heterodontus francisci (Horn shark)).